A 2774-amino-acid polypeptide reads, in one-letter code: Teneurin-2 (2774 aa).

In terms of domain architecture, Teneurin N-terminal spans 1–375 (MDVKDRRHRS…KPSKYCSWKC (375 aa)). At 1–379 (MDVKDRRHRS…YCSWKCAALS (379 aa)) the chain is on the cytoplasmic side. Ser-90 and Ser-124 each carry phosphoserine. Residues 111-271 (TGSDADSDTE…HHHSSANSLN (161 aa)) are disordered. Residues 141 to 155 (SSGLSSRENSALTLT) show a composition bias toward polar residues. Thr-155 carries the phosphothreonine modification. Ser-157 is modified (phosphoserine). The segment covering 159 to 168 (NENKSDDDNG) has biased composition (basic and acidic residues). The span at 174-188 (TSSSSLLPSAQLPSS) shows a compositional bias: low complexity. Residues 202–211 (DSNTSHQIMD) show a composition bias toward polar residues. Residues 229–240 (SGPQQASSSGPP) show a composition bias toward low complexity. Residues 380-400 (AIAAALLLAILLAYFIAMHLL) traverse the membrane as a helical segment. The Extracellular portion of the chain corresponds to 401-2774 (GLNWQLQPAD…FLRQNEMGKR (2374 aa)). Asn-443 and Asn-482 each carry an N-linked (GlcNAc...) asparagine glycan. EGF-like domains follow at residues 575–603 (DCPR…ADCA), 605–634 (AACP…AECD), 636–668 (PMNQ…EHCE), 669–701 (EVDC…NCEL), 702–735 (ARVQ…PDCS), 738–766 (VCSV…AACD), 769–797 (VCHP…EHCT), and 808–841 (DGCP…PGCN). Cystine bridges form between Cys-576/Cys-586, Cys-580/Cys-591, Cys-593/Cys-602, Cys-611/Cys-622, Cys-624/Cys-633, Cys-640/Cys-651, Cys-645/Cys-656, Cys-658/Cys-667, Cys-672/Cys-683, Cys-677/Cys-688, Cys-690/Cys-699, Cys-710/Cys-723, Cys-725/Cys-734, Cys-739/Cys-749, Cys-743/Cys-754, Cys-756/Cys-765, Cys-770/Cys-780, Cys-774/Cys-785, Cys-787/Cys-796, Cys-810/Cys-820, Cys-814/Cys-829, and Cys-831/Cys-840. N-linked (GlcNAc...) asparagine glycosylation is found at Asn-925, Asn-948, and Asn-1267. NHL repeat units lie at residues 1272–1316 (LELR…VKSL), 1342–1386 (ARCG…NGII), 1401–1452 (LSCD…IAGR), 1474–1501 (LESA…INRL), and 1530–1573 (CYSG…VSKN). Residues 1583–1602 (YEAASPGEQELYVFNADGIH) form a YD 1 repeat. An N-linked (GlcNAc...) asparagine glycan is attached at Asn-1616. YD repeat units lie at residues 1619–1639 (YSAD…LKIR), 1682–1701 (YDGN…WTTF), and 1702–1724 (YDYD…TSLH). N-linked (GlcNAc...) asparagine glycosylation is found at Asn-1712, Asn-1749, Asn-1773, Asn-1807, and Asn-1892. YD repeat units lie at residues 1895–1914 (YFFN…ERTD), 1936–1954 (YLDK…YIFE), 1955–1975 (YDSS…HSMS), 1982–1999 (YIRN…VIFD), 2000–2021 (YSDD…VFYK), 2022–2039 (YGKL…TAVT), 2042–2062 (YDET…FSCT), 2065–2085 (YRKV…EGMI), 2093–2113 (YHDN…TPLP), 2119–2136 (YDEI…GVIY), 2137–2163 (YDIN…IKEV), 2165–2178 (YEMF…MTVQ), 2179–2202 (YDSM…TKYT), 2205–2225 (YDGD…WRYS), 2226–2246 (YDLN…LMPL), 2248–2268 (YDLR…DDDG), 2280–2300 (YNSK…SVQY), and 2302–2322 (YDGV…LQYF). N-linked (GlcNAc...) asparagine glycosylation is present at Asn-1993. Asn-2197 is a glycosylation site (N-linked (GlcNAc...) asparagine). Asn-2337 carries an N-linked (GlcNAc...) asparagine glycan. The YD 23 repeat unit spans residues 2348–2389 (YDLQGHLFAMESSSGEEYYVASDNTGTPLAVFSINGLMIKQL). An N-linked (GlcNAc...) asparagine glycan is attached at Asn-2648.

It belongs to the tenascin family. Teneurin subfamily. In terms of assembly, homodimer; disulfide-linked. Heterodimer with either TENM1 or TENM3. May also form heterodimer with TENM4. Interacts with ADGRL1 isoform 2. In terms of processing, derives from the membrane form by proteolytic processing. Post-translationally, derives from the plasma membrane form by proteolytic cleavage and translocates to the nucleus. Homophilic binding of the C-terminal extracellular domain stimulates its proteolytic cleavage and release in the cytoplasmic. Is subjected to rapid degradation by the proteasome pathway. As to expression, expressed in the brain (at protein level).

It localises to the cell membrane. Its subcellular location is the presynaptic cell membrane. It is found in the postsynaptic cell membrane. The protein resides in the endoplasmic reticulum. The protein localises to the golgi apparatus. It localises to the synapse. Its subcellular location is the cell projection. It is found in the dendritic spine. The protein resides in the filopodium. The protein localises to the growth cone. It localises to the nucleus. Its subcellular location is the PML body. Involved in neural development, regulating the establishment of proper connectivity within the nervous system. Acts as a ligand of the ADGRL1 and ADGRL3 receptors that are expressed at the surface of adjacent cells. Promotes the formation of filopodia and enlarged growth cone in neuronal cells. Mediates axon guidance and homophilic and heterophilic cell-cell adhesion. May function as a cellular signal transducer. Functionally, induces gene transcription inhibition. The protein is Teneurin-2 (Tenm2) of Rattus norvegicus (Rat).